Reading from the N-terminus, the 493-residue chain is Ketol-acid reductoisomerase (NADP(+)) (493 aa).

Residues 14–208 (LDQLGRCRFM…GGDRAGVLES (195 aa)) form the KARI N-terminal Rossmann domain. Residues 45–48 (CGAQ), R68, R76, S78, and 108–110 (DKQ) each bind NADP(+). The active site involves H132. G158 contacts NADP(+). KARI C-terminal knotted domains are found at residues 209-345 (SFVA…APKA) and 346-486 (DGIK…MTDM). Mg(2+) contacts are provided by D217, E221, E390, and E394. S415 lines the substrate pocket.

This sequence belongs to the ketol-acid reductoisomerase family. Requires Mg(2+) as cofactor.

The enzyme catalyses (2R)-2,3-dihydroxy-3-methylbutanoate + NADP(+) = (2S)-2-acetolactate + NADPH + H(+). It carries out the reaction (2R,3R)-2,3-dihydroxy-3-methylpentanoate + NADP(+) = (S)-2-ethyl-2-hydroxy-3-oxobutanoate + NADPH + H(+). It participates in amino-acid biosynthesis; L-isoleucine biosynthesis; L-isoleucine from 2-oxobutanoate: step 2/4. It functions in the pathway amino-acid biosynthesis; L-valine biosynthesis; L-valine from pyruvate: step 2/4. Its function is as follows. Involved in the biosynthesis of branched-chain amino acids (BCAA). Catalyzes an alkyl-migration followed by a ketol-acid reduction of (S)-2-acetolactate (S2AL) to yield (R)-2,3-dihydroxy-isovalerate. In the isomerase reaction, S2AL is rearranged via a Mg-dependent methyl migration to produce 3-hydroxy-3-methyl-2-ketobutyrate (HMKB). In the reductase reaction, this 2-ketoacid undergoes a metal-dependent reduction by NADPH to yield (R)-2,3-dihydroxy-isovalerate. This Mannheimia succiniciproducens (strain KCTC 0769BP / MBEL55E) protein is Ketol-acid reductoisomerase (NADP(+)).